The following is a 482-amino-acid chain: Glycogen synthase (482 aa).

Residue lysine 20 participates in ADP-alpha-D-glucose binding.

This sequence belongs to the glycosyltransferase 1 family. Bacterial/plant glycogen synthase subfamily.

It carries out the reaction [(1-&gt;4)-alpha-D-glucosyl](n) + ADP-alpha-D-glucose = [(1-&gt;4)-alpha-D-glucosyl](n+1) + ADP + H(+). Its pathway is glycan biosynthesis; glycogen biosynthesis. In terms of biological role, synthesizes alpha-1,4-glucan chains using ADP-glucose. The polypeptide is Glycogen synthase (Aliivibrio salmonicida (strain LFI1238) (Vibrio salmonicida (strain LFI1238))).